A 659-amino-acid chain; its full sequence is tRNA (guanine(26)-N(2))-dimethyltransferase (659 aa).

A mitochondrion-targeting transit peptide spans 1-23 (MQGSSLWLSLTFRSARVLSRARF). Positions 55–499 (TTVTEGAAKI…APASALWDIM (445 aa)) constitute a Trm1 methyltransferase domain. S-adenosyl-L-methionine is bound at residue arginine 82. Serine 120 carries the post-translational modification Phosphoserine. S-adenosyl-L-methionine contacts are provided by arginine 166 and aspartate 184. Residues cysteine 348, cysteine 351, cysteine 384, and cysteine 387 each coordinate Zn(2+). Serine 517 carries the post-translational modification Phosphoserine. Disordered stretches follow at residues 537–578 (EDAN…AMEE) and 616–659 (RGDQ…PGID). The short motif at 543-575 (SRQRGLKRFQANPEANWGPRPRARPGGKAADEA) is the Nuclear localization signal element. The segment at 600–627 (RLKTFPCKRFKEGTCQRGDQCCYSHSPP) adopts a C3H1-type zinc-finger fold. Residue serine 625 is modified to Phosphoserine. A phosphothreonine mark is found at threonine 628 and threonine 646.

This sequence belongs to the class I-like SAM-binding methyltransferase superfamily. Trm1 family. In terms of processing, (Microbial infection) Cleaved between Gln-530 and Ala-531 by the 3C-like proteinase nsp5 from human coronavirus SARS-CoV-2, leading to its inactivation.

The protein localises to the mitochondrion. The protein resides in the nucleus. It is found in the cytoplasm. It carries out the reaction guanosine(26) in tRNA + 2 S-adenosyl-L-methionine = N(2)-dimethylguanosine(26) in tRNA + 2 S-adenosyl-L-homocysteine + 2 H(+). In terms of biological role, dimethylates a single guanine residue at position 26 of most nuclear- and mitochondrial-encoded tRNAs using S-adenosyl-L-methionine as donor of the methyl groups. tRNA guanine(26)-dimethylation is required for redox homeostasis and ensure proper cellular proliferation and oxidative stress survival. In Homo sapiens (Human), this protein is tRNA (guanine(26)-N(2))-dimethyltransferase.